The sequence spans 413 residues: Transmembrane protein 237B (413 aa).

Residues Met-1–Gln-162 form a disordered region. Polar residues predominate over residues Asp-112–Gln-122. Helical transmembrane passes span Val-233–Val-253, Leu-274–Phe-294, Leu-312–Gln-332, and Ile-360–Ile-380.

Belongs to the TMEM237 family.

The protein localises to the membrane. It localises to the cell projection. It is found in the cilium. In terms of biological role, component of the transition zone in primary cilia. Required for ciliogenesis. This is Transmembrane protein 237B (tmem237b) from Danio rerio (Zebrafish).